The sequence spans 289 residues: 4-diphosphocytidyl-2-C-methyl-D-erythritol kinase (289 aa).

Lys10 is a catalytic residue. ATP is bound at residue 94–104 (PVAAGLAGGSS). The active site involves Asp136.

The protein belongs to the GHMP kinase family. IspE subfamily.

The enzyme catalyses 4-CDP-2-C-methyl-D-erythritol + ATP = 4-CDP-2-C-methyl-D-erythritol 2-phosphate + ADP + H(+). It participates in isoprenoid biosynthesis; isopentenyl diphosphate biosynthesis via DXP pathway; isopentenyl diphosphate from 1-deoxy-D-xylulose 5-phosphate: step 3/6. Functionally, catalyzes the phosphorylation of the position 2 hydroxy group of 4-diphosphocytidyl-2C-methyl-D-erythritol. This chain is 4-diphosphocytidyl-2-C-methyl-D-erythritol kinase, found in Bacillus pumilus (strain SAFR-032).